The sequence spans 314 residues: Acetaldehyde dehydrogenase 1 (314 aa).

16 to 19 (SGNI) is a binding site for NAD(+). Cys-134 serves as the catalytic Acyl-thioester intermediate. NAD(+)-binding positions include 165–173 (SAGPGTRAN) and Asn-292.

Belongs to the acetaldehyde dehydrogenase family.

The enzyme catalyses acetaldehyde + NAD(+) + CoA = acetyl-CoA + NADH + H(+). The chain is Acetaldehyde dehydrogenase 1 (mhpF) from Cupriavidus necator (strain ATCC 17699 / DSM 428 / KCTC 22496 / NCIMB 10442 / H16 / Stanier 337) (Ralstonia eutropha).